The chain runs to 401 residues: Cartilage-associated protein (401 aa).

A signal peptide spans 1–26 (MEPGRRGAAALLALLCVACALRAGRA). N-linked (GlcNAc...) asparagine glycans are attached at residues Asn87 and Asn363.

It belongs to the leprecan family. Found in articular chondrocytes. Expressed in a variety of tissues.

Its subcellular location is the secreted. The protein resides in the extracellular space. It localises to the extracellular matrix. In terms of biological role, necessary for efficient 3-hydroxylation of fibrillar collagen prolyl residues. The protein is Cartilage-associated protein (CRTAP) of Homo sapiens (Human).